Consider the following 208-residue polypeptide: Small ribosomal subunit protein eS8 (208 aa).

The interval 1–27 (MGISRDNWHKRRKTGGKRKPYHKKRKY) is disordered. Gly2 is lipidated: N-myristoyl glycine. Positions 8 to 26 (WHKRRKTGGKRKPYHKKRK) are enriched in basic residues. Residues Lys37 and Lys128 each carry the N6-acetyllysine modification. Thr130 carries the phosphothreonine modification. At Ser160 the chain carries Phosphoserine. Residues Lys170 and Lys193 each participate in a glycyl lysine isopeptide (Lys-Gly) (interchain with G-Cter in SUMO2) cross-link.

Belongs to the eukaryotic ribosomal protein eS8 family. As to quaternary structure, component of the small ribosomal subunit. Identified in a IGF2BP1-dependent mRNP granule complex containing untranslated mRNAs. Part of the small subunit (SSU) processome, composed of more than 70 proteins and the RNA chaperone small nucleolar RNA (snoRNA) U3.

It is found in the cytoplasm. The protein resides in the membrane. Its subcellular location is the nucleus. It localises to the nucleolus. Functionally, component of the small ribosomal subunit. The ribosome is a large ribonucleoprotein complex responsible for the synthesis of proteins in the cell. Part of the small subunit (SSU) processome, first precursor of the small eukaryotic ribosomal subunit. During the assembly of the SSU processome in the nucleolus, many ribosome biogenesis factors, an RNA chaperone and ribosomal proteins associate with the nascent pre-rRNA and work in concert to generate RNA folding, modifications, rearrangements and cleavage as well as targeted degradation of pre-ribosomal RNA by the RNA exosome. The chain is Small ribosomal subunit protein eS8 (Rps8) from Mus musculus (Mouse).